The sequence spans 211 residues: Protein-L-isoaspartate O-methyltransferase (211 aa).

Ser-60 is an active-site residue.

It belongs to the methyltransferase superfamily. L-isoaspartyl/D-aspartyl protein methyltransferase family.

The protein resides in the cytoplasm. It catalyses the reaction [protein]-L-isoaspartate + S-adenosyl-L-methionine = [protein]-L-isoaspartate alpha-methyl ester + S-adenosyl-L-homocysteine. Catalyzes the methyl esterification of L-isoaspartyl residues in peptides and proteins that result from spontaneous decomposition of normal L-aspartyl and L-asparaginyl residues. It plays a role in the repair and/or degradation of damaged proteins. This chain is Protein-L-isoaspartate O-methyltransferase, found in Hahella chejuensis (strain KCTC 2396).